The chain runs to 429 residues: Gamma-glutamyl phosphate reductase (429 aa).

The protein belongs to the gamma-glutamyl phosphate reductase family.

Its subcellular location is the cytoplasm. The catalysed reaction is L-glutamate 5-semialdehyde + phosphate + NADP(+) = L-glutamyl 5-phosphate + NADPH + H(+). It functions in the pathway amino-acid biosynthesis; L-proline biosynthesis; L-glutamate 5-semialdehyde from L-glutamate: step 2/2. Its function is as follows. Catalyzes the NADPH-dependent reduction of L-glutamate 5-phosphate into L-glutamate 5-semialdehyde and phosphate. The product spontaneously undergoes cyclization to form 1-pyrroline-5-carboxylate. The sequence is that of Gamma-glutamyl phosphate reductase from Bradyrhizobium sp. (strain ORS 278).